A 385-amino-acid chain; its full sequence is Probable thioesterase PNKD (385 aa).

Polar residues predominate over residues 32–42; sequence KASQNRTRALQ. Positions 32–56 are disordered; that stretch reads KASQNRTRALQSHSSPECKEEPEPL. Valine 121 bears the Phosphoserine mark. Zn(2+)-binding residues include histidine 172, histidine 174, aspartate 176, histidine 177, histidine 229, aspartate 253, and histidine 291.

Belongs to the metallo-beta-lactamase superfamily. Glyoxalase II family. In terms of assembly, isoform 2 interacts with the sarcomeric proteins, MRLC2, MYOM1 and ENO3. It depends on Zn(2+) as a cofactor. Post-translationally, undergoes cleavage at the N-terminus. In terms of tissue distribution, expressed in many discrete areas of the brain.

The protein localises to the cell membrane. Its subcellular location is the mitochondrion. It is found in the cytoplasm. The catalysed reaction is a thioester + H2O = a thiol + a carboxylate + H(+). Its function is as follows. Probable thioesterase that may play a role in cellular detoxification processes; it likely acts on a yet-unknown alpha-hydroxythioester substrate. In vitro, it is able to catalyze the hydrolysis of S-D-lactoyl-glutathione to form glutathione and D-lactic acid at very low rate, though this reaction is not physiologically relevant in vivo. This chain is Probable thioesterase PNKD (Pnkd), found in Mus musculus (Mouse).